Reading from the N-terminus, the 291-residue chain is HTH-type transcriptional regulator CitR (291 aa).

Residues 1 to 58 (MDFKWLHTFVTAAKYENFRKTAETLFLSQPTVTVHIKQLEKEISCKLFERKGRQIQLT) form the HTH lysR-type domain. A DNA-binding region (H-T-H motif) is located at residues 18–37 (FRKTAETLFLSQPTVTVHIK).

The protein belongs to the LysR transcriptional regulatory family.

Its subcellular location is the cytoplasm. Functionally, negative regulatory protein for the citA gene for citrate synthase I. This is HTH-type transcriptional regulator CitR (citR) from Bacillus subtilis (strain 168).